The sequence spans 113 residues: MTTKLERRIKIKYRVRNKISGTTERPRMSVFRSNKQIYVQVIDDLSGRTLAAASSLGMEAMPKKEQAAKVGELIAKKAQEAGITTVVFDRNGYLYHGRIKEVADAARNGGLKF.

This sequence belongs to the universal ribosomal protein uL18 family. As to quaternary structure, part of the 50S ribosomal subunit; part of the 5S rRNA/L5/L18/L25 subcomplex. Contacts the 5S and 23S rRNAs.

In terms of biological role, this is one of the proteins that bind and probably mediate the attachment of the 5S RNA into the large ribosomal subunit, where it forms part of the central protuberance. This is Large ribosomal subunit protein uL18 from Phocaeicola vulgatus (strain ATCC 8482 / DSM 1447 / JCM 5826 / CCUG 4940 / NBRC 14291 / NCTC 11154) (Bacteroides vulgatus).